Here is a 704-residue protein sequence, read N- to C-terminus: Elongation factor G (704 aa).

The region spanning 10 to 290 (NKVRNIGIMA…AVVDFLPNPL (281 aa)) is the tr-type G domain. Residues 19–26 (AHIDAGKT), 83–87 (DTPGH), and 137–140 (NKMD) contribute to the GTP site.

The protein belongs to the TRAFAC class translation factor GTPase superfamily. Classic translation factor GTPase family. EF-G/EF-2 subfamily.

It is found in the cytoplasm. In terms of biological role, catalyzes the GTP-dependent ribosomal translocation step during translation elongation. During this step, the ribosome changes from the pre-translocational (PRE) to the post-translocational (POST) state as the newly formed A-site-bound peptidyl-tRNA and P-site-bound deacylated tRNA move to the P and E sites, respectively. Catalyzes the coordinated movement of the two tRNA molecules, the mRNA and conformational changes in the ribosome. In Paenarthrobacter aurescens (strain TC1), this protein is Elongation factor G.